The chain runs to 579 residues: Extracellular serine/threonine protein kinase FAM20C (579 aa).

Residues 1–10 (MKMILVRRFR) lie on the Cytoplasmic side of the membrane. The propeptide occupies 1 to 87 (MKMILVRRFR…PNKHTLRILQ (87 aa)). A helical; Signal-anchor for type II membrane protein membrane pass occupies residues 11 to 31 (VLILVVFLLACALHIAVDLLP). Topologically, residues 32–579 (KLDRRATRSS…ATEHRASTER (548 aa)) are lumenal. The disordered stretch occupies residues 38–79 (TRSSGEPGCSCAQPAAEAAGPGWAQARSRPGESAGGDAGWPN). Residues 49–63 (AQPAAEAAGPGWAQA) are compositionally biased toward low complexity. The N-linked (GlcNAc...) asparagine glycan is linked to Asn96. The disordered stretch occupies residues 104-155 (KLPSAAEPVDHAPRGQEPRSPPPRDPAHRPLLRDPGPRPRVPPPGPSGDGSL). Basic and acidic residues-rich tracts occupy residues 111–120 (PVDHAPRGQE) and 128–140 (DPAH…DPGP). ATP-binding residues include Gln264, Lys280, and Glu301. Glu301 serves as a coordination point for Mn(2+). The segment at 349-560 (FVSPANNICF…AVRDCVEKDG (212 aa)) is kinase domain. 2 cysteine pairs are disulfide-bonded: Cys357-Cys373 and Cys362-Cys366. 384–387 (AAFL) contacts ATP. 2 cysteine pairs are disulfide-bonded: Cys421-Cys495 and Cys496-Cys555. The active site involves Asp453. ATP-binding residues include Glu458 and Asp473. A Mn(2+)-binding site is contributed by Asp473.

This sequence belongs to the FAM20 family. In terms of assembly, homodimer; disulfide-linked. Interacts with FAM20A; probably forming a heterotetramer of 2 subunits of FAM20A and 2 subunits of FAM20C. Interacts with COPII components SEC23A and SEC24A; transport of FAM20C from the endoplasmic reticulum to the Golgi is likely to be mediated by COPII vesicles. Mn(2+) is required as a cofactor. In terms of processing, N-glycosylation is required for folding. Autophosphorylated. Post-translationally, propeptide cleavage by MBTPS1/S1P promotes FAM20C secretion and maximal kinase activity which is essential for efficient osteoblast differentiation and biomineralization. As to expression, in the mammary gland, expressed at higher levels in lactating mice than in virgin mice (at protein level). Highly expressed in the tooth. No expression in the dental pulp. At the secretory stage of amelogenesis, it is detected in the matrix of the enamel, in the ameloblasts, and within the cells adjoining the stratum intermedium (a tissue layer analogous to the stellate reticulum seen in the developing molar). Strong expression is observed in maturation stage ameloblasts and throughout the non-cornified layers of the gingival epithelium. Expressed at moderate levels in bone and at low levels in kidney, liver, brain and lung. Very low expression, if any, in spleen and skeletal muscle.

It is found in the golgi apparatus membrane. It localises to the secreted. Its subcellular location is the endoplasmic reticulum. The catalysed reaction is L-seryl-[protein] + ATP = O-phospho-L-seryl-[protein] + ADP + H(+). It carries out the reaction L-threonyl-[protein] + ATP = O-phospho-L-threonyl-[protein] + ADP + H(+). Its activity is regulated as follows. Serine/threonine protein kinase activity is increased upon interaction with FAM20A. In terms of biological role, golgi serine/threonine protein kinase that phosphorylates secretory pathway proteins within Ser-x-Glu/pSer motifs and plays a key role in biomineralization of bones and teeth. Constitutes the main protein kinase for extracellular proteins, generating the majority of the extracellular phosphoproteome. Mainly phosphorylates proteins within the Ser-x-Glu/pSer motif, but also displays a broader substrate specificity. Phosphorylates ERO1A, enhancing its activity which is required to maintain endoplasmic reticulum redox homeostasis and for oxidative protein folding. During endoplasmic reticulum stress, phosphorylates P4HB/PDIA1 which induces a functional switch, causing P4HB to change from an oxidoreductase to a molecular chaperone. This is critical to maintain ER proteostasis and reduce cell death under ER stress. Phosphorylation of P4HB also promotes its interaction with ERN1, leading to reduced activity of ERN1, a key sensor for the endoplasmic reticulum unfolded protein response. Required for osteoblast differentiation and mineralization. Phosphorylates casein as well as a number of proteins involved in biomineralization such as AMELX, AMTN, ENAM and SPP1. In addition to its role in biomineralization, also plays a role in lipid homeostasis, wound healing and cell migration and adhesion. In Mus musculus (Mouse), this protein is Extracellular serine/threonine protein kinase FAM20C.